A 158-amino-acid polypeptide reads, in one-letter code: NAD(P)H-quinone oxidoreductase subunit N (158 aa).

The protein belongs to the complex I NdhN subunit family. In terms of assembly, NDH-1 can be composed of about 15 different subunits; different subcomplexes with different compositions have been identified which probably have different functions.

The protein resides in the cellular thylakoid membrane. The enzyme catalyses a plastoquinone + NADH + (n+1) H(+)(in) = a plastoquinol + NAD(+) + n H(+)(out). The catalysed reaction is a plastoquinone + NADPH + (n+1) H(+)(in) = a plastoquinol + NADP(+) + n H(+)(out). Functionally, NDH-1 shuttles electrons from an unknown electron donor, via FMN and iron-sulfur (Fe-S) centers, to quinones in the respiratory and/or the photosynthetic chain. The immediate electron acceptor for the enzyme in this species is believed to be plastoquinone. Couples the redox reaction to proton translocation, and thus conserves the redox energy in a proton gradient. Cyanobacterial NDH-1 also plays a role in inorganic carbon-concentration. The chain is NAD(P)H-quinone oxidoreductase subunit N from Microcystis aeruginosa (strain NIES-843 / IAM M-2473).